A 179-amino-acid polypeptide reads, in one-letter code: Large ribosomal subunit protein uL5 (179 aa).

This sequence belongs to the universal ribosomal protein uL5 family. As to quaternary structure, part of the 50S ribosomal subunit; part of the 5S rRNA/L5/L18/L25 subcomplex. Contacts the 5S rRNA and the P site tRNA. Forms a bridge to the 30S subunit in the 70S ribosome.

Its function is as follows. This is one of the proteins that bind and probably mediate the attachment of the 5S RNA into the large ribosomal subunit, where it forms part of the central protuberance. In the 70S ribosome it contacts protein S13 of the 30S subunit (bridge B1b), connecting the 2 subunits; this bridge is implicated in subunit movement. Contacts the P site tRNA; the 5S rRNA and some of its associated proteins might help stabilize positioning of ribosome-bound tRNAs. This is Large ribosomal subunit protein uL5 from Neisseria meningitidis serogroup C (strain 053442).